The chain runs to 304 residues: Cell surface-binding protein OPG105 (304 aa).

It belongs to the alpha-carbonic anhydrase family. As to quaternary structure, homodimer; disulfide-linked. Post-translationally, apparently non-glycosylated.

It localises to the virion membrane. In terms of biological role, binds to chondroitin sulfate on the cell surface to provide virion attachment to target cell. The polypeptide is Cell surface-binding protein OPG105 (OPG105) (Monkeypox virus).